Here is a 252-residue protein sequence, read N- to C-terminus: ATP synthase subunit a (252 aa).

7 consecutive transmembrane segments (helical) span residues 6–26 (LEQF…YFSF), 31–51 (LFML…TLNG), 88–108 (FFPL…IGMI), 117–137 (HFII…IVGF), 144–164 (FFSI…LVLL), 190–212 (LVKI…YLGQ), and 225–245 (LELG…CIYL).

The protein belongs to the ATPase A chain family. F-type ATPases have 2 components, CF(1) - the catalytic core - and CF(0) - the membrane proton channel. CF(1) has five subunits: alpha(3), beta(3), gamma(1), delta(1), epsilon(1). CF(0) has three main subunits: a, b and c.

It localises to the mitochondrion inner membrane. Functionally, mitochondrial membrane ATP synthase (F(1)F(0) ATP synthase or Complex V) produces ATP from ADP in the presence of a proton gradient across the membrane which is generated by electron transport complexes of the respiratory chain. F-type ATPases consist of two structural domains, F(1) - containing the extramembraneous catalytic core and F(0) - containing the membrane proton channel, linked together by a central stalk and a peripheral stalk. During catalysis, ATP synthesis in the catalytic domain of F(1) is coupled via a rotary mechanism of the central stalk subunits to proton translocation. Key component of the proton channel; it may play a direct role in the translocation of protons across the membrane. This Marchantia polymorpha (Common liverwort) protein is ATP synthase subunit a (ATP6).